Consider the following 860-residue polypeptide: Anoctamin-7 (860 aa).

At 1–297 the chain is on the cytoplasmic side; sequence MLRKQAGEED…YFAWLGFYTG (297 aa). The segment at 24–50 is disordered; it reads NGCSYGSTAQASEAGKQQVAPSRVGSS. The helical transmembrane segment at 298–318 threads the bilayer; that stretch reads WLLPAAVVGTVVFLAGCFLVF. Residues 319–362 lie on the Extracellular side of the membrane; it reads SDVPTQELCHSSDTFDMCPLCSDCSFWLLSSACTLAQAGRLFDH. The chain crosses the membrane as a helical span at residues 363–383; that stretch reads GGTVFFSLFMALWAVLLLEYW. Residues 384–441 are Cytoplasmic-facing; that stretch reads KRKNATLAYRWDCSDYEDIEERPRPQFAATAPMTALNPITGEDEPYFPEKNRVRRMLA. Residues 442–462 traverse the membrane as a helical segment; that stretch reads GSVVLLMMVAVVIMCLVSIIL. At 463 to 492 the chain is on the extracellular side; the sequence is YRAVMAIIVSKSNNAFLSAWASRIASLTGS. Residues 493–513 form a helical membrane-spanning segment; that stretch reads VVNLVFILILSKVYVILAQVL. The Cytoplasmic portion of the chain corresponds to 514 to 530; the sequence is TRWEMHRTQTAFEDAFT. Residues 531 to 551 traverse the membrane as a helical segment; that stretch reads LKVFIFQFVNFYASPVYIAFF. The Extracellular segment spans residues 552–652; that stretch reads KGRFVGYPGN…FHEYLEMVLQ (101 aa). Residues 653-673 traverse the membrane as a helical segment; the sequence is FGFVTIFVAACPLAPLFALLN. Over 674–701 the chain is Cytoplasmic; it reads NWVEIRLDARKFVCEYRRPVAERAQDIG. A helical transmembrane segment spans residues 702–722; sequence IWFHILAGLTHLAVISNAFLL. At 723-779 the chain is on the extracellular side; the sequence is AFSSDFLPRVYYSWTRAPDLRGFLNFTLARAPPTFTSAHNRTCRYRAFRDDDGHYSP. N-linked (GlcNAc...) asparagine glycosylation is found at asparagine 747 and asparagine 762. The helical transmembrane segment at 780–800 threads the bilayer; the sequence is TYWTLLAIRLAFVIVFEHVVF. Residues 801-860 are Cytoplasmic-facing; that stretch reads STGRFLDLLVPDIPESVEIKVKREYYLAKQALADNEALLGATGVKGEQPPSSEPSLGLPA.

Belongs to the anoctamin family.

It localises to the cell membrane. It is found in the endoplasmic reticulum. The enzyme catalyses a 1,2-diacyl-sn-glycero-3-phospho-L-serine(in) = a 1,2-diacyl-sn-glycero-3-phospho-L-serine(out). It catalyses the reaction a beta-D-galactosyl-(1&lt;-&gt;1')-N-acylsphing-4-enine(out) = a beta-D-galactosyl-(1&lt;-&gt;1')-N-acylsphing-4-enine(in). It carries out the reaction a 1,2-diacyl-sn-glycero-3-phosphocholine(in) = a 1,2-diacyl-sn-glycero-3-phosphocholine(out). Its function is as follows. Has calcium-dependent phospholipid scramblase activity; scrambles phosphatidylserine, phosphatidylcholine and galactosylceramide. Does not exhibit calcium-activated chloride channel (CaCC) activity. May play a role in cell-cell interactions. The protein is Anoctamin-7 (Ano7) of Rattus norvegicus (Rat).